The primary structure comprises 512 residues: Cytochrome P450 26B1 (512 aa).

Cysteine 441 serves as a coordination point for heme.

Belongs to the cytochrome P450 family. The cofactor is heme. Highly expressed in brain, particularly in the cerebellum and pons.

The protein localises to the endoplasmic reticulum membrane. It is found in the microsome membrane. It catalyses the reaction all-trans-retinoate + reduced [NADPH--hemoprotein reductase] + O2 = all-trans-4-hydroxyretinoate + oxidized [NADPH--hemoprotein reductase] + H2O + H(+). The catalysed reaction is all-trans-retinoate + reduced [NADPH--hemoprotein reductase] + O2 = all-trans-18-hydroxyretinoate + oxidized [NADPH--hemoprotein reductase] + H2O + H(+). Its function is as follows. A cytochrome P450 monooxygenase involved in the metabolism of retinoates (RAs), the active metabolites of vitamin A, and critical signaling molecules in animals. RAs exist as at least four different isomers: all-trans-RA (atRA), 9-cis-RA, 13-cis-RA, and 9,13-dicis-RA, where atRA is considered to be the biologically active isomer, although 9-cis-RA and 13-cis-RA also have activity. Catalyzes the hydroxylation of atRA primarily at C-4 and C-18, thereby contributing to the regulation of atRA homeostasis and signaling. Hydroxylation of atRA limits its biological activity and initiates a degradative process leading to its eventual elimination. Involved in the convertion of atRA to all-trans-4-oxo-RA. Can oxidize all-trans-13,14-dihydroretinoate (DRA) to metabolites which could include all-trans-4-oxo-DRA, all-trans-4-hydroxy-DRA, all-trans-5,8-epoxy-DRA, and all-trans-18-hydroxy-DRA. Shows preference for the following substrates: atRA &gt; 9-cis-RA &gt; 13-cis-RA. Plays a central role in germ cell development: acts by degrading RAs in the developing testis, preventing STRA8 expression, thereby leading to delay of meiosis. Required for the maintenance of the undifferentiated state of male germ cells during embryonic development in Sertoli cells, inducing arrest in G0 phase of the cell cycle and preventing meiotic entry. Plays a role in skeletal development, both at the level of patterning and in the ossification of bone and the establishment of some synovial joints. Essential for postnatal survival. Functionally, also has a significant activity in oxidation of tazarotenic acid and may therefore metabolize that xenobiotic in vivo. In Homo sapiens (Human), this protein is Cytochrome P450 26B1 (CYP26B1).